The sequence spans 360 residues: A-type ATP synthase subunit C (360 aa).

The segment at 1–23 (MRLLERLWGKKPSRKSDKKKKGT) is disordered. Residues 9-22 (GKKPSRKSDKKKKG) are compositionally biased toward basic residues.

It belongs to the V-ATPase V0D/AC39 subunit family. As to quaternary structure, has multiple subunits with at least A(3), B(3), C, D, E, F, H, I and proteolipid K(x).

It is found in the cell membrane. Its function is as follows. Component of the A-type ATP synthase that produces ATP from ADP in the presence of a proton gradient across the membrane. This is A-type ATP synthase subunit C from Methanosarcina acetivorans (strain ATCC 35395 / DSM 2834 / JCM 12185 / C2A).